We begin with the raw amino-acid sequence, 374 residues long: Flagellar P-ring protein 1 (374 aa).

An N-terminal signal peptide occupies residues Met1 to Ala29.

This sequence belongs to the FlgI family. The basal body constitutes a major portion of the flagellar organelle and consists of four rings (L,P,S, and M) mounted on a central rod.

It is found in the periplasm. It localises to the bacterial flagellum basal body. Assembles around the rod to form the L-ring and probably protects the motor/basal body from shearing forces during rotation. This is Flagellar P-ring protein 1 from Bradyrhizobium diazoefficiens (strain JCM 10833 / BCRC 13528 / IAM 13628 / NBRC 14792 / USDA 110).